Reading from the N-terminus, the 330-residue chain is Aspartate--ammonia ligase (330 aa).

It belongs to the class-II aminoacyl-tRNA synthetase family. AsnA subfamily.

The protein localises to the cytoplasm. The enzyme catalyses L-aspartate + NH4(+) + ATP = L-asparagine + AMP + diphosphate + H(+). It functions in the pathway amino-acid biosynthesis; L-asparagine biosynthesis; L-asparagine from L-aspartate (ammonia route): step 1/1. The polypeptide is Aspartate--ammonia ligase (Escherichia coli O7:K1 (strain IAI39 / ExPEC)).